A 451-amino-acid polypeptide reads, in one-letter code: Mannan endo-1,6-alpha-mannosidase DCW1 (451 aa).

The N-terminal stretch at 1 to 21 (MLAVTFTAAAVLSLLAASGRT) is a signal peptide. 6 N-linked (GlcNAc...) asparagine glycosylation sites follow: N84, N109, N203, N242, N267, and N291. Residues 397 to 419 (AMNGGTSPGDPAAGTKTKAENLP) form a disordered region. D427 carries the GPI-anchor amidated aspartate lipid modification. A propeptide spans 428–451 (RAGAGIITALIGSSFLACTLWLII) (removed in mature form).

This sequence belongs to the glycosyl hydrolase 76 family.

It localises to the secreted. It is found in the cell wall. The protein resides in the cell membrane. It carries out the reaction Random hydrolysis of (1-&gt;6)-alpha-D-mannosidic linkages in unbranched (1-&gt;6)-mannans.. Its function is as follows. Required for normal synthesis of the cell wall. This is Mannan endo-1,6-alpha-mannosidase DCW1 (DCW1) from Eremothecium gossypii (strain ATCC 10895 / CBS 109.51 / FGSC 9923 / NRRL Y-1056) (Yeast).